The primary structure comprises 149 residues: D-aminoacyl-tRNA deacylase (149 aa).

A Gly-cisPro motif, important for rejection of L-amino acids motif is present at residues 137-138 (GP).

This sequence belongs to the DTD family. Homodimer.

It is found in the cytoplasm. The enzyme catalyses glycyl-tRNA(Ala) + H2O = tRNA(Ala) + glycine + H(+). It catalyses the reaction a D-aminoacyl-tRNA + H2O = a tRNA + a D-alpha-amino acid + H(+). Functionally, an aminoacyl-tRNA editing enzyme that deacylates mischarged D-aminoacyl-tRNAs. Also deacylates mischarged glycyl-tRNA(Ala), protecting cells against glycine mischarging by AlaRS. Acts via tRNA-based rather than protein-based catalysis; rejects L-amino acids rather than detecting D-amino acids in the active site. By recycling D-aminoacyl-tRNA to D-amino acids and free tRNA molecules, this enzyme counteracts the toxicity associated with the formation of D-aminoacyl-tRNA entities in vivo and helps enforce protein L-homochirality. This chain is D-aminoacyl-tRNA deacylase, found in Koribacter versatilis (strain Ellin345).